The following is a 363-amino-acid chain: NADH-quinone oxidoreductase subunit H (363 aa).

9 helical membrane-spanning segments follow: residues 62–82 (GPMY…KLLF), 96–116 (FVIA…VVPF), 127–147 (VGLL…ILAG), 163–183 (AAQV…VMIA), 202–222 (FFDW…VSGV), 238–257 (EIVA…LFFL), 264–286 (ILVS…QGWV), 299–319 (KGGW…YIWF), and 339–359 (FIPL…YGVI).

This sequence belongs to the complex I subunit 1 family. NDH-1 is composed of 14 different subunits. Subunits NuoA, H, J, K, L, M, N constitute the membrane sector of the complex.

The protein localises to the cell inner membrane. The enzyme catalyses a quinone + NADH + 5 H(+)(in) = a quinol + NAD(+) + 4 H(+)(out). Functionally, NDH-1 shuttles electrons from NADH, via FMN and iron-sulfur (Fe-S) centers, to quinones in the respiratory chain. The immediate electron acceptor for the enzyme in this species is believed to be ubiquinone. Couples the redox reaction to proton translocation (for every two electrons transferred, four hydrogen ions are translocated across the cytoplasmic membrane), and thus conserves the redox energy in a proton gradient. This subunit may bind ubiquinone. This is NADH-quinone oxidoreductase subunit H from Xanthomonas axonopodis pv. citri (strain 306).